Here is a 282-residue protein sequence, read N- to C-terminus: Putative 4-diphosphocytidyl-2-C-methyl-D-erythritol kinase (282 aa).

Lysine 9 is an active-site residue. ATP is bound at residue 93-103; the sequence is PVSAGLAGGSA. Aspartate 135 is a catalytic residue.

Belongs to the GHMP kinase family. IspE subfamily.

The enzyme catalyses 4-CDP-2-C-methyl-D-erythritol + ATP = 4-CDP-2-C-methyl-D-erythritol 2-phosphate + ADP + H(+). In terms of biological role, catalyzes the phosphorylation of the position 2 hydroxy group of 4-diphosphocytidyl-2C-methyl-D-erythritol. This is Putative 4-diphosphocytidyl-2-C-methyl-D-erythritol kinase from Staphylococcus aureus (strain MSSA476).